A 363-amino-acid chain; its full sequence is Cell division cycle-associated protein 3 (363 aa).

Residues 1-12 (MGSAESKAQVTP) show a composition bias toward polar residues. Disordered stretches follow at residues 1–81 (MGSA…TPLR), 126–152 (VESQ…KAET), 191–210 (MNDQ…EESP), and 231–363 (ENLN…HSNS). The F-box-like stretch occupies residues 93-152 (KQLSEVFVAEDSSTEGGPLGFTGPEATNLERQVVESQTAPPAGEHVNDHEVEPSVEKAET). Residues 137 to 152 (HVNDHEVEPSVEKAET) show a composition bias toward basic and acidic residues. The segment covering 192–210 (NDQEESPIAETMNDQEESP) has biased composition (acidic residues). Polar residues predominate over residues 259–285 (SVVSTESTQATGQQQKTRGKSPRSSGV). Residues 296–308 (LLSSSSGRSPLRI) show a composition bias toward low complexity. A compositionally biased stretch (polar residues) spans 311–321 (EDNSPNTNTQH). Positions 353–355 (KEN) match the KEN box motif.

Interacts with wee1, when wee1 is phosphorylated at 'Ser-38'. In terms of processing, phosphorylated. Ubiquitinated and degraded by the APC/C-Cdh1 complex during G1 phase.

Its subcellular location is the cytoplasm. The protein resides in the cytosol. Its pathway is protein modification; protein ubiquitination. In terms of biological role, F-box-like protein which is required for entry into mitosis. Acts by participating in E3 ligase complexes that mediate the ubiquitination and degradation of WEE1 kinase at G2/M phase. The protein is Cell division cycle-associated protein 3 (cdca3) of Xenopus laevis (African clawed frog).